The primary structure comprises 127 residues: Lysozyme C (127 aa).

In terms of domain architecture, C-type lysozyme spans lysine 1 to cysteine 127. Disulfide bonds link cysteine 6-cysteine 127, cysteine 30-cysteine 115, cysteine 64-cysteine 80, and cysteine 76-cysteine 94. Active-site residues include glutamate 35 and aspartate 52. Residues lysine 82, aspartate 85, asparagine 87, aspartate 90, and aspartate 91 each contribute to the Ca(2+) site.

Belongs to the glycosyl hydrolase 22 family. Monomer. The cofactor is Ca(2+).

Its subcellular location is the secreted. It catalyses the reaction Hydrolysis of (1-&gt;4)-beta-linkages between N-acetylmuramic acid and N-acetyl-D-glucosamine residues in a peptidoglycan and between N-acetyl-D-glucosamine residues in chitodextrins.. Functionally, lysozymes have primarily a bacteriolytic function; those in tissues and body fluids are associated with the monocyte-macrophage system and enhance the activity of immunoagents. The sequence is that of Lysozyme C (LYZ) from Columba livia (Rock dove).